The chain runs to 443 residues: Glutamine synthetase (443 aa).

Residues 16–97 (KRIKFVQLIF…VYGYIYKDGK (82 aa)) enclose the GS beta-grasp domain. The GS catalytic domain maps to 103–443 (PRGVLRRTLE…EWELERYFFI (341 aa)). Mg(2+) contacts are provided by Glu126 and Glu128. Glu176 serves as a coordination point for ATP. 2 residues coordinate Mg(2+): Glu181 and Glu188. Gly233 is an L-glutamate binding site. His237 lines the Mg(2+) pocket. Residues 239-241 (HIS) and Ser241 contribute to the ATP site. L-glutamate-binding residues include Arg287, Glu293, and Arg305. 2 residues coordinate ATP: Arg305 and Arg310. Glu322 lines the Mg(2+) pocket. Position 324 (Arg324) interacts with L-glutamate.

The protein belongs to the glutamine synthetase family. In terms of assembly, oligomer of 12 subunits arranged in the form of two hexagons. Requires Mg(2+) as cofactor.

The protein resides in the cytoplasm. The catalysed reaction is L-glutamate + NH4(+) + ATP = L-glutamine + ADP + phosphate + H(+). In terms of biological role, probably involved in nitrogen metabolism via ammonium assimilation. Catalyzes the ATP-dependent biosynthesis of glutamine from glutamate and ammonia. This chain is Glutamine synthetase, found in Pyrococcus horikoshii (strain ATCC 700860 / DSM 12428 / JCM 9974 / NBRC 100139 / OT-3).